The chain runs to 77 residues: Large ribosomal subunit protein uL29 (77 aa).

It belongs to the universal ribosomal protein uL29 family.

The polypeptide is Large ribosomal subunit protein uL29 (Corynebacterium urealyticum (strain ATCC 43042 / DSM 7109)).